The sequence spans 260 residues: Hydroxyethylthiazole kinase 1 (260 aa).

Position 39 (M39) interacts with substrate. 2 residues coordinate ATP: R115 and T160. G187 contributes to the substrate binding site.

It belongs to the Thz kinase family. Mg(2+) serves as cofactor.

The enzyme catalyses 5-(2-hydroxyethyl)-4-methylthiazole + ATP = 4-methyl-5-(2-phosphooxyethyl)-thiazole + ADP + H(+). It participates in cofactor biosynthesis; thiamine diphosphate biosynthesis; 4-methyl-5-(2-phosphoethyl)-thiazole from 5-(2-hydroxyethyl)-4-methylthiazole: step 1/1. Its function is as follows. Catalyzes the phosphorylation of the hydroxyl group of 4-methyl-5-beta-hydroxyethylthiazole (THZ). The sequence is that of Hydroxyethylthiazole kinase 1 from Streptococcus pneumoniae (strain Taiwan19F-14).